A 453-amino-acid chain; its full sequence is Trigger factor (453 aa).

The PPIase FKBP-type domain maps to 171 to 256; sequence GDRITISFKG…VSLIEAPEEL (86 aa).

The protein belongs to the FKBP-type PPIase family. Tig subfamily.

Its subcellular location is the cytoplasm. It catalyses the reaction [protein]-peptidylproline (omega=180) = [protein]-peptidylproline (omega=0). Involved in protein export. Acts as a chaperone by maintaining the newly synthesized protein in an open conformation. Functions as a peptidyl-prolyl cis-trans isomerase. The chain is Trigger factor from Nitrobacter winogradskyi (strain ATCC 25391 / DSM 10237 / CIP 104748 / NCIMB 11846 / Nb-255).